Consider the following 76-residue polypeptide: Small ribosomal subunit protein bS18 (76 aa).

The protein belongs to the bacterial ribosomal protein bS18 family. In terms of assembly, part of the 30S ribosomal subunit. Forms a tight heterodimer with protein bS6.

Binds as a heterodimer with protein bS6 to the central domain of the 16S rRNA, where it helps stabilize the platform of the 30S subunit. This chain is Small ribosomal subunit protein bS18, found in Pseudomonas entomophila (strain L48).